Consider the following 394-residue polypeptide: 1-deoxy-D-xylulose 5-phosphate reductoisomerase (394 aa).

T10, G11, S12, I13, N38, and N125 together coordinate NADPH. Residue K126 participates in 1-deoxy-D-xylulose 5-phosphate binding. Residue E127 participates in NADPH binding. D151 contacts Mn(2+). Residues S152, E153, S182, and H205 each contribute to the 1-deoxy-D-xylulose 5-phosphate site. Mn(2+) is bound at residue E153. Residue G211 participates in NADPH binding. 1-deoxy-D-xylulose 5-phosphate-binding residues include S218, N223, K224, and E227. E227 serves as a coordination point for Mn(2+).

This sequence belongs to the DXR family. It depends on Mg(2+) as a cofactor. Requires Mn(2+) as cofactor.

The catalysed reaction is 2-C-methyl-D-erythritol 4-phosphate + NADP(+) = 1-deoxy-D-xylulose 5-phosphate + NADPH + H(+). It participates in isoprenoid biosynthesis; isopentenyl diphosphate biosynthesis via DXP pathway; isopentenyl diphosphate from 1-deoxy-D-xylulose 5-phosphate: step 1/6. Its function is as follows. Catalyzes the NADPH-dependent rearrangement and reduction of 1-deoxy-D-xylulose-5-phosphate (DXP) to 2-C-methyl-D-erythritol 4-phosphate (MEP). The protein is 1-deoxy-D-xylulose 5-phosphate reductoisomerase of Methylococcus capsulatus (strain ATCC 33009 / NCIMB 11132 / Bath).